We begin with the raw amino-acid sequence, 455 residues long: Nuclear mRNA export protein THP1 (455 aa).

Positions 220-431 (IEYRYLLGRY…QLCVVKKTTM (212 aa)) constitute a PCI domain.

In terms of assembly, heterodimer with THP1. The SAC3-THP1 complex interacts with CDC31 and SUS1, and with the mRNA export factor MEX67-MTR2, the TREX complex component SUB2, and the nucleoporin NUP1.

Its subcellular location is the nucleus envelope. Its function is as follows. Component of the SAC3-THP1 complex, which functions in transcription-coupled mRNA export from the nucleus to the cytoplasm. SAC3-THP1 functions in docking export-competent ribonucleoprotein particles (mRNPs) to the nuclear entrance of the nuclear pore complex (nuclear basket), by association with components of the nuclear mRNA export machinery (MEX67-MTR2 and SUB2) in the nucleoplasm and the nucleoporin NUP1 at the nuclear basket. THP1 binds to RNA in vitro. The sequence is that of Nuclear mRNA export protein THP1 (THP1) from Saccharomyces cerevisiae (strain ATCC 204508 / S288c) (Baker's yeast).